The primary structure comprises 146 residues: Large ribosomal subunit protein uL15 (146 aa).

Residues 1 to 42 are disordered; the sequence is MTIKLHDLQPARGSKTTRTRVGRGEASKGKTAGRGTKGTKAR.

This sequence belongs to the universal ribosomal protein uL15 family. Part of the 50S ribosomal subunit.

In terms of biological role, binds to the 23S rRNA. This chain is Large ribosomal subunit protein uL15, found in Mycobacterium leprae (strain Br4923).